Consider the following 647-residue polypeptide: 1-deoxy-D-xylulose-5-phosphate synthase (647 aa).

Thiamine diphosphate contacts are provided by residues His-79 and Gly-120–Ala-122. Asp-152 provides a ligand contact to Mg(2+). Residues Gly-153–Ser-154, Asn-181, Phe-293, and Glu-377 each bind thiamine diphosphate. Asn-181 is a binding site for Mg(2+).

This sequence belongs to the transketolase family. DXPS subfamily. In terms of assembly, homodimer. Mg(2+) is required as a cofactor. It depends on thiamine diphosphate as a cofactor.

It carries out the reaction D-glyceraldehyde 3-phosphate + pyruvate + H(+) = 1-deoxy-D-xylulose 5-phosphate + CO2. The protein operates within metabolic intermediate biosynthesis; 1-deoxy-D-xylulose 5-phosphate biosynthesis; 1-deoxy-D-xylulose 5-phosphate from D-glyceraldehyde 3-phosphate and pyruvate: step 1/1. Functionally, catalyzes the acyloin condensation reaction between C atoms 2 and 3 of pyruvate and glyceraldehyde 3-phosphate to yield 1-deoxy-D-xylulose-5-phosphate (DXP). The sequence is that of 1-deoxy-D-xylulose-5-phosphate synthase from Bacteroides thetaiotaomicron (strain ATCC 29148 / DSM 2079 / JCM 5827 / CCUG 10774 / NCTC 10582 / VPI-5482 / E50).